The chain runs to 251 residues: 1-(5-phosphoribosyl)-5-[(5-phosphoribosylamino)methylideneamino] imidazole-4-carboxamide isomerase (251 aa).

Residue D8 is the Proton acceptor of the active site. D129 functions as the Proton donor in the catalytic mechanism.

It belongs to the HisA/HisF family.

The protein resides in the cytoplasm. It catalyses the reaction 1-(5-phospho-beta-D-ribosyl)-5-[(5-phospho-beta-D-ribosylamino)methylideneamino]imidazole-4-carboxamide = 5-[(5-phospho-1-deoxy-D-ribulos-1-ylimino)methylamino]-1-(5-phospho-beta-D-ribosyl)imidazole-4-carboxamide. It functions in the pathway amino-acid biosynthesis; L-histidine biosynthesis; L-histidine from 5-phospho-alpha-D-ribose 1-diphosphate: step 4/9. This Desulfosudis oleivorans (strain DSM 6200 / JCM 39069 / Hxd3) (Desulfococcus oleovorans) protein is 1-(5-phosphoribosyl)-5-[(5-phosphoribosylamino)methylideneamino] imidazole-4-carboxamide isomerase.